The primary structure comprises 192 residues: Ion-translocating oxidoreductase complex subunit A (192 aa).

6 consecutive transmembrane segments (helical) span residues 5-25 (LLLL…FLGL), 39-59 (IGMS…SYLV), 65-85 (LPFD…AVVV), 102-122 (ALGI…VALL), 134-154 (AIFG…FSAM), and 171-191 (AIAM…TGLV).

The protein belongs to the NqrDE/RnfAE family. As to quaternary structure, the complex is composed of six subunits: RnfA, RnfB, RnfC, RnfD, RnfE and RnfG.

It localises to the cell inner membrane. Part of a membrane-bound complex that couples electron transfer with translocation of ions across the membrane. This is Ion-translocating oxidoreductase complex subunit A from Shewanella baltica (strain OS223).